The sequence spans 331 residues: Ribonuclease Z (331 aa).

7 residues coordinate Zn(2+): His56, His58, Asp60, His61, His162, Asp235, and His297. Catalysis depends on Asp60, which acts as the Proton acceptor.

This sequence belongs to the RNase Z family. In terms of assembly, homodimer. It depends on Zn(2+) as a cofactor.

It carries out the reaction Endonucleolytic cleavage of RNA, removing extra 3' nucleotides from tRNA precursor, generating 3' termini of tRNAs. A 3'-hydroxy group is left at the tRNA terminus and a 5'-phosphoryl group is left at the trailer molecule.. Functionally, zinc phosphodiesterase, which displays some tRNA 3'-processing endonuclease activity. Probably involved in tRNA maturation, by removing a 3'-trailer from precursor tRNA. The sequence is that of Ribonuclease Z (rnz) from Deinococcus radiodurans (strain ATCC 13939 / DSM 20539 / JCM 16871 / CCUG 27074 / LMG 4051 / NBRC 15346 / NCIMB 9279 / VKM B-1422 / R1).